Reading from the N-terminus, the 1541-residue chain is Regulator of G-protein signaling loco (1541 aa).

Residues 1-66 (MHHHHPPLPI…RRKKRANYNY (66 aa)) form a disordered region. Low complexity predominate over residues 11-36 (TGASGSTAVGTGAAAAEDASPAANSG). Polar residues predominate over residues 40-53 (ISTSTTPSGSNSQQ). One can recognise a PDZ domain in the interval 71-148 (TVEVRRGYNG…SIRMQIAENY (78 aa)). Positions 182 to 222 (AKLHRLRNSPQKKLNPPEAVEPHKSKSSPDHPTLKPVLEDP) are disordered. A compositionally biased stretch (basic and acidic residues) spans 201–214 (VEPHKSKSSPDHPT). A PID domain is found at 247-423 (AALECRVIVG…VVNLVRSMYT (177 aa)). Disordered stretches follow at residues 449–473 (GAVAAAHSPQPSNHSEISTTTSNSD) and 708–761 (SEPD…ASMN). Composition is skewed to polar residues over residues 457–473 (PQPSNHSEISTTTSNSD) and 744–761 (EQQQLGQSSPVRRTASMN). An RGS domain is found at 827–943 (SFERMLQDAA…IRSDLYKSCV (117 aa)). The disordered stretch occupies residues 978–1004 (SASNAEDRRRKSLLPWHRKTRSKSRDR). A compositionally biased stretch (basic residues) spans 987–999 (RKSLLPWHRKTRS). 2 RBD domains span residues 1072 to 1142 (SLCR…IERR) and 1143 to 1213 (VAFK…IVMV). Residues 1258-1327 (DAAASEKSRP…SEEAATTQAV (70 aa)) form a disordered region. Residues 1273 to 1285 (MKSNEAPSETSSL) show a composition bias toward polar residues. Residues 1312–1325 (TSSSQQSEEAATTQ) show a composition bias toward low complexity. One can recognise a GoLoco domain in the interval 1354–1376 (QDELLEGLKRAQLARLEDQRGTE). The interval 1410-1513 (KVPATPTEIP…ASKPGTFASK (104 aa)) is disordered. Residues 1460-1469 (APPPLPPKPK) show a composition bias toward pro residues. The segment covering 1483–1499 (PTGNYCNKYSPSKQVPT) has biased composition (polar residues).

As to quaternary structure, interacts (via GoLoco and RGS domains) with Galphai (via GDP- or GTP-bound forms). Expressed in surface and longitudinal glial cells, gut and heart (at protein level).

Its subcellular location is the cytoplasm. The protein localises to the cell membrane. It is found in the apical cell membrane. Its function is as follows. Acts as a regulator of G protein signaling (RGS). Modulates G protein alpha subunits nucleotide exchange and hydrolysis activities by functioning either as a GTPase-activating protein (GAP), thereby driving G protein alpha subunits into their inactive GDP-bound form, or as a GDP-dissociation inhibitor (GDI). Confers GDI and GAP activities on G(i) alpha subunit Galphai. Confers GAP activity on G(o)-alpha subunit Galphao and G(i) alpha subunit Galphai. Involved in the dorsal-ventral axis formation of the egg. Acts as a G-protein signaling for glial cell differentiation during embryogenesis; Galphai, Galphao and the G-protein coupled receptor, moody, are required in the surface glia to achieve effective insulation of the nerve cord. May be essential for nurse cell dumping during oogenesis. Required in neuroblast asymmetrical cell division. Plays a role in stress resistance and life span control. This Drosophila melanogaster (Fruit fly) protein is Regulator of G-protein signaling loco (loco).